Here is a 905-residue protein sequence, read N- to C-terminus: DNA gyrase subunit A (905 aa).

The Topo IIA-type catalytic domain occupies 35 to 524 (IPDVRDGLKP…GEFDQDIEDL (490 aa)). The active-site O-(5'-phospho-DNA)-tyrosine intermediate is Y123. The GyrA-box motif lies at 551 to 557 (QKRGGKG). Positions 882 to 905 (IAESSDDNEEDSEFEEEVAEEGSE) are disordered. A compositionally biased stretch (acidic residues) spans 885–905 (SSDDNEEDSEFEEEVAEEGSE).

Belongs to the type II topoisomerase GyrA/ParC subunit family. In terms of assembly, heterotetramer, composed of two GyrA and two GyrB chains. In the heterotetramer, GyrA contains the active site tyrosine that forms a transient covalent intermediate with DNA, while GyrB binds cofactors and catalyzes ATP hydrolysis.

Its subcellular location is the cytoplasm. It catalyses the reaction ATP-dependent breakage, passage and rejoining of double-stranded DNA.. Functionally, a type II topoisomerase that negatively supercoils closed circular double-stranded (ds) DNA in an ATP-dependent manner to modulate DNA topology and maintain chromosomes in an underwound state. Negative supercoiling favors strand separation, and DNA replication, transcription, recombination and repair, all of which involve strand separation. Also able to catalyze the interconversion of other topological isomers of dsDNA rings, including catenanes and knotted rings. Type II topoisomerases break and join 2 DNA strands simultaneously in an ATP-dependent manner. The polypeptide is DNA gyrase subunit A (Rickettsia bellii (strain RML369-C)).